The primary structure comprises 231 residues: Cytidylate kinase (231 aa).

11-19 (GHSSCGKST) provides a ligand contact to ATP.

It belongs to the cytidylate kinase family. Type 1 subfamily.

The protein localises to the cytoplasm. The catalysed reaction is CMP + ATP = CDP + ADP. The enzyme catalyses dCMP + ATP = dCDP + ADP. The protein is Cytidylate kinase of Porphyromonas gingivalis (strain ATCC BAA-308 / W83).